Here is a 1120-residue protein sequence, read N- to C-terminus: Hachiman protein HamB (1120 aa).

A Helicase ATP-binding domain is found at 278–452; sequence DGELLKNDGF…WIGEDDKAKR (175 aa). 291–298 contacts ATP; sequence MPTSSGKT. A DEAH box motif is present at residues 395-398; that stretch reads DEGH. The Helicase C-terminal domain maps to 521–710; that stretch reads ATATKMLDVG…NIEKATSGLY (190 aa).

The protein belongs to the helicase family.

Functionally, component of antiviral defense system Hachiman, composed of HamA and HamB. Expression of Hachiman in B.subtilis (strain BEST7003) confers resistance to phages phi105, phi29, phi3T, rho14, SBSphiJ, SpBeta and SPR. Probably a helicase. The sequence is that of Hachiman protein HamB from Bacillus cereus.